The sequence spans 201 residues: Putative ankyrin repeat protein YahD (201 aa).

ANK repeat units lie at residues 5–34 (NLPA…DINT), 38–67 (QGKT…DINK), 71–100 (TCLN…DLNC), 104–134 (FGGV…NVNQ), 138–172 (VGWT…SPHL), and 176–201 (YGKT…AAGA).

In Escherichia coli (strain K12), this protein is Putative ankyrin repeat protein YahD (yahD).